The sequence spans 503 residues: UPF0522 protein C (503 aa).

The signal sequence occupies residues Met-1–Ser-18. 3 N-linked (GlcNAc...) asparagine glycosylation sites follow: Asn-330, Asn-337, and Asn-370.

It belongs to the UPF0522 family.

Its subcellular location is the secreted. The protein is UPF0522 protein C of Dictyostelium discoideum (Social amoeba).